The following is a 204-amino-acid chain: MEVMSVIPYVIEQTGRGERSYDIYSRLLKDRIIFVGTPVESQMANSIVAQLLLLDSQNPEQEIQMYINCPGGEVYAGLAIYDTMRYIKAPVSTICVGMAMSMGSVLLMAGDKGKRMALPNSRIMIHQGSAGFRGNTPDLEVQAKEVLKLRDTLVDIYHKHTDLPQEKLLRDMERDYFMSPEEALKYGLIDQVIDQTRENRGGEE.

Ser-101 functions as the Nucleophile in the catalytic mechanism. The active site involves His-126.

This sequence belongs to the peptidase S14 family. As to quaternary structure, fourteen ClpP subunits assemble into 2 heptameric rings which stack back to back to give a disk-like structure with a central cavity, resembling the structure of eukaryotic proteasomes.

It localises to the cytoplasm. It catalyses the reaction Hydrolysis of proteins to small peptides in the presence of ATP and magnesium. alpha-casein is the usual test substrate. In the absence of ATP, only oligopeptides shorter than five residues are hydrolyzed (such as succinyl-Leu-Tyr-|-NHMec, and Leu-Tyr-Leu-|-Tyr-Trp, in which cleavage of the -Tyr-|-Leu- and -Tyr-|-Trp bonds also occurs).. In terms of biological role, cleaves peptides in various proteins in a process that requires ATP hydrolysis. Has a chymotrypsin-like activity. Plays a major role in the degradation of misfolded proteins. The chain is ATP-dependent Clp protease proteolytic subunit from Deinococcus radiodurans (strain ATCC 13939 / DSM 20539 / JCM 16871 / CCUG 27074 / LMG 4051 / NBRC 15346 / NCIMB 9279 / VKM B-1422 / R1).